The sequence spans 224 residues: UPF0173 metal-dependent hydrolase TTHA1283 (224 aa).

Belongs to the UPF0173 family.

In Thermus thermophilus (strain ATCC 27634 / DSM 579 / HB8), this protein is UPF0173 metal-dependent hydrolase TTHA1283.